Reading from the N-terminus, the 36-residue chain is Photosystem I reaction center subunit VIII (36 aa).

The chain crosses the membrane as a helical span at residues 6–28 (LPSIFVPLVGLLFPAIAMVSLFF).

The protein belongs to the PsaI family.

The protein resides in the plastid. It is found in the chloroplast thylakoid membrane. Functionally, may help in the organization of the PsaL subunit. The sequence is that of Photosystem I reaction center subunit VIII from Nymphaea alba (White water-lily).